We begin with the raw amino-acid sequence, 361 residues long: Phospho-N-acetylmuramoyl-pentapeptide-transferase (361 aa).

The next 10 helical transmembrane spans lie at 27-47 (GAFFTALIFGFIFGRPLINLL), 72-92 (TPTMGGLLILSALTLATLLWA), 98-118 (YVWLVLFVTVSFGLIGFMDDF), 135-155 (LAMGFGIAGIAGAGALLLHPE), 169-189 (TLINLSILFIPFCMIVIAGSA), 200-220 (GLAIMPVMIAAGTLGVIAYAV), 240-260 (IFVFTSALIGGGLGFLWYNAP), 263-283 (AVFMGDTGSLALGGALGAIAV), 289-309 (IVLVVVGGIFVVEALSVIIQV), and 338-358 (QIVIRFWIISLILALIGLATL).

This sequence belongs to the glycosyltransferase 4 family. MraY subfamily. Mg(2+) is required as a cofactor.

The protein localises to the cell inner membrane. It carries out the reaction UDP-N-acetyl-alpha-D-muramoyl-L-alanyl-gamma-D-glutamyl-meso-2,6-diaminopimeloyl-D-alanyl-D-alanine + di-trans,octa-cis-undecaprenyl phosphate = di-trans,octa-cis-undecaprenyl diphospho-N-acetyl-alpha-D-muramoyl-L-alanyl-D-glutamyl-meso-2,6-diaminopimeloyl-D-alanyl-D-alanine + UMP. The protein operates within cell wall biogenesis; peptidoglycan biosynthesis. Its function is as follows. Catalyzes the initial step of the lipid cycle reactions in the biosynthesis of the cell wall peptidoglycan: transfers peptidoglycan precursor phospho-MurNAc-pentapeptide from UDP-MurNAc-pentapeptide onto the lipid carrier undecaprenyl phosphate, yielding undecaprenyl-pyrophosphoryl-MurNAc-pentapeptide, known as lipid I. The protein is Phospho-N-acetylmuramoyl-pentapeptide-transferase of Dinoroseobacter shibae (strain DSM 16493 / NCIMB 14021 / DFL 12).